The following is a 176-amino-acid chain: Ferritin heavy polypeptide-like 17E (176 aa).

Residues 10-159 form the Ferritin-like diiron domain; sequence QNYDWQCEDA…GYLTNLRQMG (150 aa). Residues cysteine 27, glutamate 107, and glutamine 141 each contribute to the Fe cation site.

This sequence belongs to the ferritin family. Expressed in the testes and spermatogonia.

The polypeptide is Ferritin heavy polypeptide-like 17E (Mus musculus (Mouse)).